The sequence spans 154 residues: uncharacterized protein (154 aa).

5 helical membrane passes run threonine 5–leucine 24, phenylalanine 29–alanine 48, proline 53–alanine 75, isoleucine 87–valine 109, and alanine 124–isoleucine 146.

It is found in the cell membrane. This is an uncharacterized protein from Archaeoglobus fulgidus (strain ATCC 49558 / DSM 4304 / JCM 9628 / NBRC 100126 / VC-16).